The following is a 191-amino-acid chain: Pyridoxal 5'-phosphate synthase subunit PdxT (191 aa).

46–48 contacts L-glutamine; sequence GES. Residue Cys-75 is the Nucleophile of the active site. Residues Arg-101 and 129 to 130 each bind L-glutamine; that span reads IR. Active-site charge relay system residues include His-165 and Glu-167.

It belongs to the glutaminase PdxT/SNO family. In the presence of PdxS, forms a dodecamer of heterodimers. Only shows activity in the heterodimer.

It catalyses the reaction aldehydo-D-ribose 5-phosphate + D-glyceraldehyde 3-phosphate + L-glutamine = pyridoxal 5'-phosphate + L-glutamate + phosphate + 3 H2O + H(+). It carries out the reaction L-glutamine + H2O = L-glutamate + NH4(+). Its pathway is cofactor biosynthesis; pyridoxal 5'-phosphate biosynthesis. Functionally, catalyzes the hydrolysis of glutamine to glutamate and ammonia as part of the biosynthesis of pyridoxal 5'-phosphate. The resulting ammonia molecule is channeled to the active site of PdxS. The sequence is that of Pyridoxal 5'-phosphate synthase subunit PdxT from Staphylococcus saprophyticus subsp. saprophyticus (strain ATCC 15305 / DSM 20229 / NCIMB 8711 / NCTC 7292 / S-41).